The following is a 345-amino-acid chain: tRNA-specific 2-thiouridylase MnmA (345 aa).

ATP-binding positions include 6-13 (AMSGGVDS) and Leu32. The active-site Nucleophile is Cys100. A disulfide bond links Cys100 and Cys197. Gly124 serves as a coordination point for ATP. Residues 146–148 (RDQ) form an interaction with tRNA region. Cys197 acts as the Cysteine persulfide intermediate in catalysis.

It belongs to the MnmA/TRMU family.

The protein resides in the cytoplasm. It carries out the reaction S-sulfanyl-L-cysteinyl-[protein] + uridine(34) in tRNA + AH2 + ATP = 2-thiouridine(34) in tRNA + L-cysteinyl-[protein] + A + AMP + diphosphate + H(+). Its function is as follows. Catalyzes the 2-thiolation of uridine at the wobble position (U34) of tRNA, leading to the formation of s(2)U34. The polypeptide is tRNA-specific 2-thiouridylase MnmA (Acidiphilium cryptum (strain JF-5)).